A 212-amino-acid polypeptide reads, in one-letter code: 2-C-methyl-D-erythritol 4-phosphate cytidylyltransferase (212 aa).

The protein belongs to the IspD/TarI cytidylyltransferase family. IspD subfamily.

It carries out the reaction 2-C-methyl-D-erythritol 4-phosphate + CTP + H(+) = 4-CDP-2-C-methyl-D-erythritol + diphosphate. It participates in isoprenoid biosynthesis; isopentenyl diphosphate biosynthesis via DXP pathway; isopentenyl diphosphate from 1-deoxy-D-xylulose 5-phosphate: step 2/6. Catalyzes the formation of 4-diphosphocytidyl-2-C-methyl-D-erythritol from CTP and 2-C-methyl-D-erythritol 4-phosphate (MEP). The chain is 2-C-methyl-D-erythritol 4-phosphate cytidylyltransferase from Chlamydia felis (strain Fe/C-56) (Chlamydophila felis).